The chain runs to 105 residues: Small ribosomal subunit protein eS26 (105 aa).

It belongs to the eukaryotic ribosomal protein eS26 family. Component of the small ribosomal subunit.

It localises to the cytoplasm. This chain is Small ribosomal subunit protein eS26 (RPS26), found in Encephalitozoon cuniculi (strain GB-M1) (Microsporidian parasite).